Here is a 511-residue protein sequence, read N- to C-terminus: 2-isopropylmalate synthase (511 aa).

Positions 5 to 267 constitute a Pyruvate carboxyltransferase domain; that stretch reads LIVFDTTLRD…DTNVDISQIV (263 aa). Mn(2+) contacts are provided by Asp-14, His-202, His-204, and Asn-238. The interval 393–511 is regulatory domain; it reads KLSWLKVVSE…YPVERAYPQV (119 aa).

The protein belongs to the alpha-IPM synthase/homocitrate synthase family. LeuA type 1 subfamily. As to quaternary structure, homodimer. Mn(2+) is required as a cofactor.

Its subcellular location is the cytoplasm. It carries out the reaction 3-methyl-2-oxobutanoate + acetyl-CoA + H2O = (2S)-2-isopropylmalate + CoA + H(+). Its pathway is amino-acid biosynthesis; L-leucine biosynthesis; L-leucine from 3-methyl-2-oxobutanoate: step 1/4. In terms of biological role, catalyzes the condensation of the acetyl group of acetyl-CoA with 3-methyl-2-oxobutanoate (2-ketoisovalerate) to form 3-carboxy-3-hydroxy-4-methylpentanoate (2-isopropylmalate). This Nitrosococcus oceani (strain ATCC 19707 / BCRC 17464 / JCM 30415 / NCIMB 11848 / C-107) protein is 2-isopropylmalate synthase.